The primary structure comprises 360 residues: Phospho-N-acetylmuramoyl-pentapeptide-transferase (360 aa).

The next 10 helical transmembrane spans lie at 3-23 (SILVGAAVALVVSILFTPYLI), 52-72 (MGGVAILVAMWAGYLVAHLTV), 81-101 (GLLVLGLTTALGIVGFLDDFI), 115-135 (AKLVGQLVASVLFAVLAMQFA), 153-173 (ITVISFGSVGFVIFAYIAISG), 187-207 (LAGGTAAMVLAIYVVISFWQF), 230-250 (IALVAGAAMAACVGFLWWNAA), 254-274 (IFMGDTGSLALGGLLAGLSMV), 282-302 (IIIGGLFVVEALSVVMQIVVF), and 333-353 (FWVLAAISAMFGLGLFYADWL).

Belongs to the glycosyltransferase 4 family. MraY subfamily. It depends on Mg(2+) as a cofactor.

The protein resides in the cell membrane. It catalyses the reaction UDP-N-acetyl-alpha-D-muramoyl-L-alanyl-gamma-D-glutamyl-meso-2,6-diaminopimeloyl-D-alanyl-D-alanine + di-trans,octa-cis-undecaprenyl phosphate = di-trans,octa-cis-undecaprenyl diphospho-N-acetyl-alpha-D-muramoyl-L-alanyl-D-glutamyl-meso-2,6-diaminopimeloyl-D-alanyl-D-alanine + UMP. The protein operates within cell wall biogenesis; peptidoglycan biosynthesis. Catalyzes the initial step of the lipid cycle reactions in the biosynthesis of the cell wall peptidoglycan: transfers peptidoglycan precursor phospho-MurNAc-pentapeptide from UDP-MurNAc-pentapeptide onto the lipid carrier undecaprenyl phosphate, yielding undecaprenyl-pyrophosphoryl-MurNAc-pentapeptide, known as lipid I. This is Phospho-N-acetylmuramoyl-pentapeptide-transferase from Saccharopolyspora erythraea (strain ATCC 11635 / DSM 40517 / JCM 4748 / NBRC 13426 / NCIMB 8594 / NRRL 2338).